The sequence spans 540 residues: Beta-secretase (540 aa).

The signal sequence occupies residues 1-31; the sequence is MHFSLPTSRIVVVVPAAAICIVCVLIETCTA. One can recognise a Peptidase A1 domain in the interval 81-435; the sequence is YYIEVDIGTP…DRENKRVGFA (355 aa). Catalysis depends on residues D99 and D302. Intrachain disulfides connect C222–C439, C291–C469, and C345–C397. The helical transmembrane segment at 483 to 503 threads the bilayer; that stretch reads ITAYVLAAICLVCLIPVIVFA. The Cytoplasmic portion of the chain corresponds to 504–540; sequence LTHQINKRCKGRRGRGVVNHHRLDQEGLAENEPNSDP.

The protein belongs to the peptidase A1 family.

The protein localises to the membrane. The protein is Beta-secretase of Strongylocentrotus purpuratus (Purple sea urchin).